The following is a 910-amino-acid chain: NADH-quinone oxidoreductase subunit G (910 aa).

The region spanning 1 to 83 is the 2Fe-2S ferredoxin-type domain; that stretch reads MAKIYVDGKA…GTIISINDDT (83 aa). [2Fe-2S] cluster contacts are provided by cysteine 34, cysteine 45, cysteine 48, and cysteine 67. The 40-residue stretch at 83–122 folds into the 4Fe-4S His(Cys)3-ligated-type domain; it reads TSKKFRSNIVELLLTNHPHDCPVCEEGGNCHLQDMTVMTT. Positions 99, 103, 106, 112, 151, 154, 157, 201, 228, 231, 235, and 263 each coordinate [4Fe-4S] cluster. One can recognise a 4Fe-4S Mo/W bis-MGD-type domain in the interval 221 to 277; sequence MQYAPGICQNCSIGCNISIGERYGEIRRIENRYHESINHYLICDLGRFGYSHTNLKN.

It belongs to the complex I 75 kDa subunit family. As to quaternary structure, composed of 13 different subunits. Subunits NuoCD, E, F, and G constitute the peripheral sector of the complex. It depends on [2Fe-2S] cluster as a cofactor. [4Fe-4S] cluster serves as cofactor.

It catalyses the reaction a quinone + NADH + 5 H(+)(in) = a quinol + NAD(+) + 4 H(+)(out). Its function is as follows. NDH-1 shuttles electrons from NADH, via FMN and iron-sulfur (Fe-S) centers, to quinones in the respiratory chain. Couples the redox reaction to proton translocation (for every two electrons transferred, four hydrogen ions are translocated across the cytoplasmic membrane), and thus conserves the redox energy in a proton gradient. The sequence is that of NADH-quinone oxidoreductase subunit G (nuoG) from Buchnera aphidicola subsp. Schizaphis graminum (strain Sg).